We begin with the raw amino-acid sequence, 412 residues long: FAD-dependent monooxygenase nscC (412 aa).

The first 21 residues, 1 to 21, serve as a signal peptide directing secretion; that stretch reads MGKQQETILIIGAGIAGLTTS. Residues Glu35 and Ala46 each contribute to the FAD site. A glycan (N-linked (GlcNAc...) asparagine) is linked at Asn92. Arg119 serves as a coordination point for FAD. Asn170 and Asn231 each carry an N-linked (GlcNAc...) asparagine glycan. FAD contacts are provided by Asp326 and Gly339.

Belongs to the paxM FAD-dependent monooxygenase family. Requires FAD as cofactor.

Its pathway is secondary metabolite biosynthesis. FAD-dependent monooxygenase; part of the gene cluster that mediates the biosynthesis of neosartoricin B, a prenylated anthracenone that probably exhibits T-cell antiproliferative activity, suggestive of a physiological role as an immunosuppressive agent. The non-reducing polyketide synthase nscA probably synthesizes and cyclizes the decaketide backbone. The hydrolase nscB then mediates the product release through hydrolysis followed by spontaneous decarboxylation. The prenyltransferase nscD catalyzes the addition of the dimethylallyl group to the aromatic C5. The FAD-dependent monooxygenase nscC is then responsible for the stereospecific hydroxylation at C2. Neosartoricin B can be converted into two additional compounds neosartoricins C and D. Neosartoricin C is a spirocyclic compound that is cyclized through the attack of C3 hydroxyl on C14, followed by dehydration. On the other hand, neosartoricin D is a further cyclized compound in which attack of C2 on C14 in neosartoricin C results in the formation of the acetal-containing dioxabicyclo-octanone ring. Both of these compounds are novel and possibly represent related metabolites of the gene cluster. In Arthroderma benhamiae (strain ATCC MYA-4681 / CBS 112371) (Trichophyton mentagrophytes), this protein is FAD-dependent monooxygenase nscC.